Here is a 942-residue protein sequence, read N- to C-terminus: Protein inturned (942 aa).

The tract at residues 1 to 52 is disordered; it reads MASVASCDSRPSSDELPGDPSSQEEDEDYDFEDRVSDSGSYSSASSDYDDLE. Residues 22 to 31 show a composition bias toward acidic residues; it reads SQEEDEDYDF. A compositionally biased stretch (low complexity) spans 37-46; it reads DSGSYSSASS. Residues 185 to 263 form the PDZ domain; that stretch reads LVGIIHQTKW…PMQVKLTFEN (79 aa). 2 positions are modified to phosphoserine: serine 670 and serine 674. The disordered stretch occupies residues 704-754; sequence TRKPSPSCSSGGSDNGCEGGEDDGFSPHTTPDAVRKQRESQGSDGLEESGT.

This sequence belongs to the inturned family. In terms of assembly, component of the CPLANE (ciliogenesis and planar polarity effectors) complex, composed of INTU, FUZ and WDPCP. Interacts with CPLANE1. Interacts with NPHP4 and DAAM1; INTU is mediating the interaction between NPHP4 and DAAM1.

The protein localises to the cytoplasm. The protein resides in the cell surface. Its subcellular location is the cytoskeleton. It localises to the cilium basal body. It is found in the microtubule organizing center. The protein localises to the centrosome. The protein resides in the centriole. Its function is as follows. Plays a key role in ciliogenesis and embryonic development. Regulator of cilia formation by controlling the organization of the apical actin cytoskeleton and the positioning of the basal bodies at the apical cell surface, which in turn is essential for the normal orientation of elongating ciliary microtubules. Plays a key role in definition of cell polarity via its role in ciliogenesis but not via conversion extension. Has an indirect effect on hedgehog signaling. Proposed to function as core component of the CPLANE (ciliogenesis and planar polarity effectors) complex involved in the recruitment of peripheral IFT-A proteins to basal bodies. Required for recruitment of CPLANE2 to the mother centriole. Binds phosphatidylinositol 3-phosphate with highest affinity, followed by phosphatidylinositol 4-phosphate and phosphatidylinositol 5-phosphate. This Homo sapiens (Human) protein is Protein inturned (INTU).